Here is a 529-residue protein sequence, read N- to C-terminus: Bifunctional purine biosynthesis protein PurH (529 aa).

The MGS-like domain maps to 1-148 (MQQRRPVRRA…KNHKDVAIVV (148 aa)).

It belongs to the PurH family.

It catalyses the reaction (6R)-10-formyltetrahydrofolate + 5-amino-1-(5-phospho-beta-D-ribosyl)imidazole-4-carboxamide = 5-formamido-1-(5-phospho-D-ribosyl)imidazole-4-carboxamide + (6S)-5,6,7,8-tetrahydrofolate. The enzyme catalyses IMP + H2O = 5-formamido-1-(5-phospho-D-ribosyl)imidazole-4-carboxamide. The protein operates within purine metabolism; IMP biosynthesis via de novo pathway; 5-formamido-1-(5-phospho-D-ribosyl)imidazole-4-carboxamide from 5-amino-1-(5-phospho-D-ribosyl)imidazole-4-carboxamide (10-formyl THF route): step 1/1. It participates in purine metabolism; IMP biosynthesis via de novo pathway; IMP from 5-formamido-1-(5-phospho-D-ribosyl)imidazole-4-carboxamide: step 1/1. This is Bifunctional purine biosynthesis protein PurH from Salmonella typhi.